The chain runs to 149 residues: Angiogenin (149 aa).

Residues 1–24 (MVMGLGPLVLIFVLGLGVTPPTLA) form the signal peptide. Glutamine 25 carries the pyrrolidone carboxylic acid modification. The Proton acceptor role is filled by histidine 37. Arginine 45 contacts tRNA. Intrachain disulfides connect cysteine 50–cysteine 105, cysteine 63–cysteine 116, and cysteine 81–cysteine 131. The Nucleolar localization signal signature appears at 55-59 (KRRDL). TRNA-binding residues include cysteine 105 and isoleucine 127. Residue histidine 138 is the Proton donor of the active site.

This sequence belongs to the pancreatic ribonuclease family. As to quaternary structure, homodimer. Interacts with RNH1; inhibiting ANG ribonuclease activity. Interacts with PCNA.

It localises to the secreted. It is found in the nucleus. The protein resides in the nucleolus. Its subcellular location is the cytoplasm. The protein localises to the stress granule. Has weak tRNA ribonuclease activity by itself due to partial autoinhibition by its C-terminus, which folds into a short alpha-helix that partially occludes the substrate-binding site. In absence of stress, the ribonuclease activity is inhibited by RNH1 in the cytoplasm. In response to stress, dissociates from RNH1 in the cytoplasm and associates with cytoplasmic ribosomes with vacant A-sites: ribosomes directly activate the tRNA ribonuclease activity of ANG by refolding the C-terminal alpha-helix. In response to stress, the angiogenic activity of ANG is inhibited by RNH1 in the nucleus. Functionally, secreted ribonuclease that can either promote or restrict cell proliferation of target cells, depending on the context. Endocytosed in target cells via its receptor PLXNB2 and translocates to the cytoplasm or nucleus. Under stress conditions, localizes to the cytoplasm and promotes the assembly of stress granules (SGs): specifically cleaves a subset of tRNAs within anticodon loops to produce tRNA-derived stress-induced fragments (tiRNAs), resulting in translation repression and inhibition of cell proliferation. tiRNas also prevent formation of apoptosome, thereby promoting cell survival. Preferentially cleaves RNAs between a pyrimidine and an adenosine residue, suggesting that it cleaves the anticodon loop of tRNA(Ala) (32-UUAGCAU-38) after positions 33 and 36. Cleaves a subset of tRNAs, including tRNA(Ala), tRNA(Glu), tRNA(Gly), tRNA(Lys), tRNA(Val), tRNA(His), tRNA(Asp) and tRNA(Sec). Under growth conditions and in differentiated cells, translocates to the nucleus and stimulates ribosomal RNA (rRNA) transcription, including that containing the initiation site sequences of 45S rRNA, thereby promoting cell growth and proliferation. Angiogenin induces vascularization of normal and malignant tissues via its ability to promote rRNA transcription. Involved in hematopoietic stem and progenitor cell (HSPC) growth and survival by promoting rRNA transcription in growth conditions and inhibiting translation in response to stress, respectively. Mediates the crosstalk between myeloid and intestinal epithelial cells to protect the intestinal epithelial barrier integrity: secreted by myeloid cells and promotes intestinal epithelial cells proliferation and survival. Also mediates osteoclast-endothelial cell crosstalk in growing bone: produced by osteoclasts and protects the neighboring vascular cells against senescence by promoting rRNA transcription. This is Angiogenin (ANG) from Oryctolagus cuniculus (Rabbit).